The following is a 376-amino-acid chain: Lipoprotein p33 (376 aa).

Residues 1 to 30 (MKIKKIKLLKALALTGAFGIVATVPVIVYS) form the signal peptide. A lipid anchor (N-palmitoyl cysteine) is attached at Cys31. The S-diacylglycerol cysteine moiety is linked to residue Cys31. The tract at residues 35–59 (DNNGGTGDNNTGGGGSGTDQQQGTT) is disordered. The segment covering 38–51 (GGTGDNNTGGGGSG) has biased composition (gly residues).

The protein belongs to the p35 lipoprotein family.

It localises to the cell membrane. This chain is Lipoprotein p33, found in Malacoplasma penetrans (Mycoplasma penetrans).